The primary structure comprises 314 residues: Olfactory receptor-like protein I9 (314 aa).

The Extracellular segment spans residues 1-25 (MTRRNQTAISQFFLLGLPFPPEYQH). A glycan (N-linked (GlcNAc...) asparagine) is linked at asparagine 5. The helical transmembrane segment at 26 to 50 (LFYALFLAMYLTTLLGNLIIIILIL) threads the bilayer. The Cytoplasmic segment spans residues 51-57 (LDSHLHT). Residues 58–79 (PMYLFLSNLSFADLCFSSVTMP) form a helical membrane-spanning segment. The Extracellular segment spans residues 80-100 (KLLQNMQSQVPSIPYAGCLAQ). Cysteine 97 and cysteine 189 are disulfide-bonded. Residues 101–120 (IYFFLFFGDLGNFLLVAMAY) traverse the membrane as a helical segment. The Cytoplasmic segment spans residues 121–139 (DRYVAICFPLHYMSIMSPK). The chain crosses the membrane as a helical span at residues 140-158 (LCVSLVVLSWVLTTFHAML). The Extracellular portion of the chain corresponds to 159–196 (HTLLMARLSFCEDSVIPHYFCDMSTLLKVACSDTHDNE). A helical transmembrane segment spans residues 197 to 219 (LAIFILGGPIVVLPFLLIIVSYA). Over 220-236 (RIVSSIFKVPSSQSIHK) the chain is Cytoplasmic. The chain crosses the membrane as a helical span at residues 237 to 260 (AFSTCGSHLSVVSLFYGTVIGLYL). The Extracellular portion of the chain corresponds to 261–272 (CPSANNSTVKET). A helical transmembrane segment spans residues 273–292 (VMSLMYTMVTPMLNPFIYSL). Residues 293-314 (RNRDIKDALEKIMCKKQIPSFL) lie on the Cytoplasmic side of the membrane.

This sequence belongs to the G-protein coupled receptor 1 family. In terms of tissue distribution, olfactory epithelium.

Its subcellular location is the cell membrane. Odorant receptor. This is Olfactory receptor-like protein I9 from Rattus norvegicus (Rat).